We begin with the raw amino-acid sequence, 371 residues long: Putative glutamate--cysteine ligase 2 (371 aa).

The protein belongs to the glutamate--cysteine ligase type 2 family. YbdK subfamily.

It catalyses the reaction L-cysteine + L-glutamate + ATP = gamma-L-glutamyl-L-cysteine + ADP + phosphate + H(+). Its function is as follows. ATP-dependent carboxylate-amine ligase which exhibits weak glutamate--cysteine ligase activity. The sequence is that of Putative glutamate--cysteine ligase 2 from Burkholderia cenocepacia (strain HI2424).